Here is a 591-residue protein sequence, read N- to C-terminus: L-fucose isomerase (591 aa).

Active-site proton acceptor residues include Glu337 and Asp361. 3 residues coordinate Mn(2+): Glu337, Asp361, and His528.

This sequence belongs to the L-fucose isomerase family. Homohexamer. Mn(2+) is required as a cofactor.

It is found in the cytoplasm. It catalyses the reaction L-fucose = L-fuculose. It participates in carbohydrate degradation; L-fucose degradation; L-lactaldehyde and glycerone phosphate from L-fucose: step 1/3. Converts the aldose L-fucose into the corresponding ketose L-fuculose. This chain is L-fucose isomerase, found in Escherichia coli (strain 55989 / EAEC).